A 442-amino-acid chain; its full sequence is Histidine--tRNA ligase (442 aa).

Belongs to the class-II aminoacyl-tRNA synthetase family. In terms of assembly, homodimer.

The protein resides in the cytoplasm. The catalysed reaction is tRNA(His) + L-histidine + ATP = L-histidyl-tRNA(His) + AMP + diphosphate + H(+). The protein is Histidine--tRNA ligase of Helicobacter pylori (strain P12).